We begin with the raw amino-acid sequence, 299 residues long: Acetaldehyde dehydrogenase (299 aa).

NAD(+) is bound at residue 11 to 14 (SGNI). Cysteine 126 acts as the Acyl-thioester intermediate in catalysis. Residues 157 to 165 (SAGPGTRAN) and asparagine 267 each bind NAD(+).

Belongs to the acetaldehyde dehydrogenase family.

It catalyses the reaction acetaldehyde + NAD(+) + CoA = acetyl-CoA + NADH + H(+). This chain is Acetaldehyde dehydrogenase, found in Bacillus cereus (strain ATCC 10987 / NRS 248).